A 937-amino-acid chain; its full sequence is Protein translocase subunit SecA (937 aa).

Residues glutamine 87, 105–109 (GEGKT), and aspartate 494 each bind ATP. The disordered stretch occupies residues 881 to 937 (RGLNYIGPDEGGRASVHSDAEEYGGGTPAAAGTRRERREAARAEGKGKRGPKSRRKH). Basic and acidic residues-rich tracts occupy residues 890–900 (EGGRASVHSDA) and 913–927 (TRRE…EGKG). The segment covering 928-937 (KRGPKSRRKH) has biased composition (basic residues).

Belongs to the SecA family. As to quaternary structure, monomer and homodimer. Part of the essential Sec protein translocation apparatus which comprises SecA, SecYEG and auxiliary proteins SecDF. Other proteins may also be involved.

Its subcellular location is the cell membrane. The protein localises to the cytoplasm. It catalyses the reaction ATP + H2O + cellular proteinSide 1 = ADP + phosphate + cellular proteinSide 2.. Its function is as follows. Part of the Sec protein translocase complex. Interacts with the SecYEG preprotein conducting channel. Has a central role in coupling the hydrolysis of ATP to the transfer of proteins into and across the cell membrane, serving as an ATP-driven molecular motor driving the stepwise translocation of polypeptide chains across the membrane. The polypeptide is Protein translocase subunit SecA (Nocardia farcinica (strain IFM 10152)).